A 266-amino-acid polypeptide reads, in one-letter code: Proteasome subunit alpha type-1 (266 aa).

The protein belongs to the peptidase T1A family. The 26S proteasome consists of a 20S proteasome core and two 19S regulatory subunits. The 20S proteasome core is composed of 28 subunits that are arranged in four stacked rings, resulting in a barrel-shaped structure. The two end rings are each formed by seven alpha subunits, and the two central rings are each formed by seven beta subunits. The catalytic chamber with the active sites is on the inside of the barrel.

The protein resides in the cytoplasm. It localises to the nucleus. Functionally, the proteasome is a multicatalytic proteinase complex which is characterized by its ability to cleave peptides with Arg, Phe, Tyr, Leu, and Glu adjacent to the leaving group at neutral or slightly basic pH. The proteasome has an ATP-dependent proteolytic activity. In Trypanosoma brucei brucei, this protein is Proteasome subunit alpha type-1.